A 296-amino-acid chain; its full sequence is 4-hydroxybenzoate octaprenyltransferase (296 aa).

A run of 8 helical transmembrane segments spans residues 29-49 (IGIYLLLWPTLWSLWIAADGV), 55-75 (LLIFVLGVILMRAAGCVINDF), 102-122 (AWITFAVLVALSFGLVLLTNA), 146-166 (YYPQVVLGAAYSWGILMAFTA), 169-189 (GELPASAWLLFLANVLWTVAY), 219-239 (LIIGSLQGLTLLLLALAGSRF), 241-261 (LGLYFYLGLAVAAACFVWEAW), and 275-295 (FLHNHWAGLAIFLGTVADYAL).

Belongs to the UbiA prenyltransferase family. Requires Mg(2+) as cofactor.

The protein localises to the cell inner membrane. The catalysed reaction is all-trans-octaprenyl diphosphate + 4-hydroxybenzoate = 4-hydroxy-3-(all-trans-octaprenyl)benzoate + diphosphate. It functions in the pathway cofactor biosynthesis; ubiquinone biosynthesis. Functionally, catalyzes the prenylation of para-hydroxybenzoate (PHB) with an all-trans polyprenyl group. Mediates the second step in the final reaction sequence of ubiquinone-8 (UQ-8) biosynthesis, which is the condensation of the polyisoprenoid side chain with PHB, generating the first membrane-bound Q intermediate 3-octaprenyl-4-hydroxybenzoate. This is 4-hydroxybenzoate octaprenyltransferase from Pseudomonas aeruginosa (strain UCBPP-PA14).